A 381-amino-acid polypeptide reads, in one-letter code: Homoserine O-succinyltransferase (381 aa).

Positions 45–360 (NAVLVCHALN…PHGHDAFLLD (316 aa)) constitute an AB hydrolase-1 domain. The active-site Nucleophile is the Ser151. Arg221 provides a ligand contact to substrate. Residues Asp321 and His354 contribute to the active site. Position 355 (Asp355) interacts with substrate.

It belongs to the AB hydrolase superfamily. MetX family. Homodimer.

It is found in the cytoplasm. It carries out the reaction L-homoserine + succinyl-CoA = O-succinyl-L-homoserine + CoA. Its pathway is amino-acid biosynthesis; L-methionine biosynthesis via de novo pathway; O-succinyl-L-homoserine from L-homoserine: step 1/1. Its function is as follows. Transfers a succinyl group from succinyl-CoA to L-homoserine, forming succinyl-L-homoserine. The polypeptide is Homoserine O-succinyltransferase (Burkholderia mallei (strain NCTC 10247)).